Here is a 459-residue protein sequence, read N- to C-terminus: tRNA modification GTPase MnmE (459 aa).

The (6S)-5-formyl-5,6,7,8-tetrahydrofolate site is built by Arg-29, Glu-86, and Lys-125. The TrmE-type G domain maps to 221–382 (GMNVVIAGRP…LTEHLKAVMG (162 aa)). Asn-231 serves as a coordination point for K(+). Residues 231-236 (NAGKSS), 250-256 (TNIEGTT), and 275-278 (DTAG) each bind GTP. A Mg(2+)-binding site is contributed by Ser-235. Thr-250, Ile-252, and Thr-255 together coordinate K(+). Position 256 (Thr-256) interacts with Mg(2+). Lys-459 serves as a coordination point for (6S)-5-formyl-5,6,7,8-tetrahydrofolate.

It belongs to the TRAFAC class TrmE-Era-EngA-EngB-Septin-like GTPase superfamily. TrmE GTPase family. In terms of assembly, homodimer. Heterotetramer of two MnmE and two MnmG subunits. Requires K(+) as cofactor.

It is found in the cytoplasm. Exhibits a very high intrinsic GTPase hydrolysis rate. Involved in the addition of a carboxymethylaminomethyl (cmnm) group at the wobble position (U34) of certain tRNAs, forming tRNA-cmnm(5)s(2)U34. The chain is tRNA modification GTPase MnmE from Marinomonas sp. (strain MWYL1).